A 260-amino-acid chain; its full sequence is 4-hydroxy-tetrahydrodipicolinate reductase (260 aa).

NAD(+) is bound by residues 12-17, 92-94, and 118-121; these read GFRGKM, GTT, and APNF. His-148 acts as the Proton donor/acceptor in catalysis. His-149 serves as a coordination point for (S)-2,3,4,5-tetrahydrodipicolinate. Lys-152 functions as the Proton donor in the catalytic mechanism. (S)-2,3,4,5-tetrahydrodipicolinate is bound at residue 158–159; the sequence is GT.

This sequence belongs to the DapB family.

It is found in the cytoplasm. The catalysed reaction is (S)-2,3,4,5-tetrahydrodipicolinate + NAD(+) + H2O = (2S,4S)-4-hydroxy-2,3,4,5-tetrahydrodipicolinate + NADH + H(+). It catalyses the reaction (S)-2,3,4,5-tetrahydrodipicolinate + NADP(+) + H2O = (2S,4S)-4-hydroxy-2,3,4,5-tetrahydrodipicolinate + NADPH + H(+). Its pathway is amino-acid biosynthesis; L-lysine biosynthesis via DAP pathway; (S)-tetrahydrodipicolinate from L-aspartate: step 4/4. Catalyzes the conversion of 4-hydroxy-tetrahydrodipicolinate (HTPA) to tetrahydrodipicolinate. The chain is 4-hydroxy-tetrahydrodipicolinate reductase from Lactococcus lactis subsp. cremoris (strain MG1363).